A 525-amino-acid polypeptide reads, in one-letter code: Phosphatidylinositol 4-kinase alpha 2 (525 aa).

A pleckstrin homology (PH) domain conferring phosphoinositide binding specificity region spans residues 163 to 278 (SDVRQHIVDG…VKPQACIFKV (116 aa)). Residues 239–509 (VDSGIPLQSA…VCTDAYNKWT (271 aa)) enclose the PI3K/PI4K catalytic domain. Residues 245-251 (LQSAAKV) form a G-loop region. Residues 373 to 381 (QPKDRHNGN) are catalytic loop. The interval 392–417 (HIDFGFILETSPGGNMRFENAHFKLS) is activation loop.

Belongs to the PI3/PI4-kinase family. Type III PI4K subfamily.

The protein localises to the membrane. It catalyses the reaction a 1,2-diacyl-sn-glycero-3-phospho-(1D-myo-inositol) + ATP = a 1,2-diacyl-sn-glycero-3-phospho-(1D-myo-inositol 4-phosphate) + ADP + H(+). Its function is as follows. Acts on phosphatidylinositol (PtdIns) in the first committed step in the production of the second messenger inositol-1,4,5,-trisphosphate. The sequence is that of Phosphatidylinositol 4-kinase alpha 2 (PI4KA2) from Arabidopsis thaliana (Mouse-ear cress).